The sequence spans 245 residues: Probable phosphatase KPN78578_10290 (245 aa).

Residues H7, H9, H15, H40, E73, H101, H131, D192, and H194 each contribute to the Zn(2+) site.

It belongs to the PHP family. As to quaternary structure, homotrimer. The cofactor is Zn(2+).

This is Probable phosphatase KPN78578_10290 from Klebsiella pneumoniae subsp. pneumoniae (strain ATCC 700721 / MGH 78578).